The following is a 212-amino-acid chain: Proteasome subunit beta (212 aa).

Positions 1-11 (MSQEHQDVKTG) are cleaved as a propeptide — removed in mature form; by autocatalysis. Catalysis depends on Thr-12, which acts as the Nucleophile.

It belongs to the peptidase T1B family. In terms of assembly, the 20S proteasome core is composed of 14 alpha and 14 beta subunits that assemble into four stacked heptameric rings, resulting in a barrel-shaped structure. The two inner rings, each composed of seven catalytic beta subunits, are sandwiched by two outer rings, each composed of seven alpha subunits. The catalytic chamber with the active sites is on the inside of the barrel. Has a gated structure, the ends of the cylinder being occluded by the N-termini of the alpha-subunits. Is capped at one or both ends by the proteasome regulatory ATPase, PAN.

The protein localises to the cytoplasm. It catalyses the reaction Cleavage of peptide bonds with very broad specificity.. Its activity is regulated as follows. The formation of the proteasomal ATPase PAN-20S proteasome complex, via the docking of the C-termini of PAN into the intersubunit pockets in the alpha-rings, triggers opening of the gate for substrate entry. Interconversion between the open-gate and close-gate conformations leads to a dynamic regulation of the 20S proteasome proteolysis activity. Component of the proteasome core, a large protease complex with broad specificity involved in protein degradation. The polypeptide is Proteasome subunit beta (Methanocorpusculum labreanum (strain ATCC 43576 / DSM 4855 / Z)).